Reading from the N-terminus, the 939-residue chain is Phosphoenolpyruvate carboxylase (939 aa).

Catalysis depends on residues His-151 and Lys-593.

It belongs to the PEPCase type 1 family. Mg(2+) serves as cofactor.

It carries out the reaction oxaloacetate + phosphate = phosphoenolpyruvate + hydrogencarbonate. In terms of biological role, forms oxaloacetate, a four-carbon dicarboxylic acid source for the tricarboxylic acid cycle. In Gloeobacter violaceus (strain ATCC 29082 / PCC 7421), this protein is Phosphoenolpyruvate carboxylase.